A 257-amino-acid chain; its full sequence is Succinate dehydrogenase subunit 5, mitochondrial (257 aa).

Residues 1–89 (MGTLGRAIHT…AMGMGQVRRF (89 aa)) constitute a mitochondrion transit peptide.

Component of complex II composed of eight subunits in plants: four classical SDH subunits SDH1, SDH2, SDH3 and SDH4 (a flavoprotein (FP), an iron-sulfur protein (IP), and a cytochrome b composed of a large and a small subunit.), as well as four subunits unknown in mitochondria from bacteria and heterotrophic eukaryotes.

Its subcellular location is the mitochondrion inner membrane. It participates in carbohydrate metabolism; tricarboxylic acid cycle. The polypeptide is Succinate dehydrogenase subunit 5, mitochondrial (Arabidopsis thaliana (Mouse-ear cress)).